Reading from the N-terminus, the 295-residue chain is MLILPIVKGEYKKDYNLKHLTWFKVGGNAEIFFKPLDREDLKSFLIQNKQKLPIKTFGAGSNIIIRDGGIEGVVIKLGQNFSNIEFIDNHLIVGSSCLNYNLAKFCQANAISGFEFLVGIPGTIGGGVAMNAGAYGSEFKDIIVQIEAIDFAGNFLTFTNEEIGFKYRSNNLPKNLIILKAVFKINKGDSENILLRMNEINNARSSTQPIKERTGGSTFANPAGRKSWELIDKVGLRGYRIGGASMSELHCNFMINNGDATAKDLEDLGDFVRQKVFEDSGVKLEWEIKRIGRHP.

The FAD-binding PCMH-type domain occupies K24 to G188. R168 is a catalytic residue. Catalysis depends on S217, which acts as the Proton donor. E287 is an active-site residue.

Belongs to the MurB family. Requires FAD as cofactor.

The protein localises to the cytoplasm. It carries out the reaction UDP-N-acetyl-alpha-D-muramate + NADP(+) = UDP-N-acetyl-3-O-(1-carboxyvinyl)-alpha-D-glucosamine + NADPH + H(+). It participates in cell wall biogenesis; peptidoglycan biosynthesis. Cell wall formation. The chain is UDP-N-acetylenolpyruvoylglucosamine reductase from Rickettsia massiliae (strain Mtu5).